We begin with the raw amino-acid sequence, 339 residues long: Holliday junction branch migration complex subunit RuvB (339 aa).

Residues 1-181 (MEERLVSGYE…FGMVHRLEFY (181 aa)) form a large ATPase domain (RuvB-L) region. ATP contacts are provided by residues L20, R21, G62, K65, T66, T67, 128–130 (EDF), R171, Y181, and R218. T66 is a Mg(2+) binding site. Positions 182-252 (SVEELMLIIN…NAKAALDLLE (71 aa)) are small ATPAse domain (RuvB-S). Residues 255 to 339 (ELGLDPTDRL…NKNAGELSLW (85 aa)) form a head domain (RuvB-H) region. Residues R310 and R315 each coordinate DNA.

The protein belongs to the RuvB family. Homohexamer. Forms an RuvA(8)-RuvB(12)-Holliday junction (HJ) complex. HJ DNA is sandwiched between 2 RuvA tetramers; dsDNA enters through RuvA and exits via RuvB. An RuvB hexamer assembles on each DNA strand where it exits the tetramer. Each RuvB hexamer is contacted by two RuvA subunits (via domain III) on 2 adjacent RuvB subunits; this complex drives branch migration. In the full resolvosome a probable DNA-RuvA(4)-RuvB(12)-RuvC(2) complex forms which resolves the HJ.

The protein resides in the cytoplasm. It carries out the reaction ATP + H2O = ADP + phosphate + H(+). In terms of biological role, the RuvA-RuvB-RuvC complex processes Holliday junction (HJ) DNA during genetic recombination and DNA repair, while the RuvA-RuvB complex plays an important role in the rescue of blocked DNA replication forks via replication fork reversal (RFR). RuvA specifically binds to HJ cruciform DNA, conferring on it an open structure. The RuvB hexamer acts as an ATP-dependent pump, pulling dsDNA into and through the RuvAB complex. RuvB forms 2 homohexamers on either side of HJ DNA bound by 1 or 2 RuvA tetramers; 4 subunits per hexamer contact DNA at a time. Coordinated motions by a converter formed by DNA-disengaged RuvB subunits stimulates ATP hydrolysis and nucleotide exchange. Immobilization of the converter enables RuvB to convert the ATP-contained energy into a lever motion, pulling 2 nucleotides of DNA out of the RuvA tetramer per ATP hydrolyzed, thus driving DNA branch migration. The RuvB motors rotate together with the DNA substrate, which together with the progressing nucleotide cycle form the mechanistic basis for DNA recombination by continuous HJ branch migration. Branch migration allows RuvC to scan DNA until it finds its consensus sequence, where it cleaves and resolves cruciform DNA. The sequence is that of Holliday junction branch migration complex subunit RuvB from Carboxydothermus hydrogenoformans (strain ATCC BAA-161 / DSM 6008 / Z-2901).